A 334-amino-acid chain; its full sequence is MKTKRVTIKDIAELAGVSKATASLVLNGRGKELRVAQETRERVLAIAREQHYQPSIHARSLRDNRSHTIGLVVPEITNYGFAVFSHELETLCREAGVQLLISCTDENPGQESVVVNNMIARQVDGLIVASCMHSDADYQKLSEQLPVVLFDRSPSDSALPLVMTDSVTPTAELISRIAPQHADEFWFLGGQPRLSPSRDRLAGFTQGLAQAGITLRPEWVINGNYHPSSGYEMFAALCARLGRPPKALFTAACGLLEGVLRYMSQHHLLDSNIHLASFDDHYLYDSLSLRIDTVQQDNRQLAWHCYDLLSQLIDGQAPEPLQRYLPATLQIRHP.

In terms of domain architecture, HTH lacI-type spans 6–63; sequence VTIKDIAELAGVSKATASLVLNGRGKELRVAQETRERVLAIAREQHYQPSIHARSLRD. The H-T-H motif DNA-binding region spans 8–27; the sequence is IKDIAELAGVSKATASLVLN.

Its function is as follows. Repressor for the scr operon. Binds D-fructose as an inducer. This chain is Sucrose operon repressor (scrR), found in Klebsiella pneumoniae.